Consider the following 511-residue polypeptide: GMP synthase [glutamine-hydrolyzing] (511 aa).

The Glutamine amidotransferase type-1 domain occupies 3 to 193 (KILILDFGGQ…VYSICDVAGD (191 aa)). The active-site Nucleophile is Cys80. Residues His167 and Glu169 contribute to the active site. In terms of domain architecture, GMPS ATP-PPase spans 194 to 384 (WEPKNIKLEK…LDIPYQNVYR (191 aa)). Residue 221 to 227 (SGGVDSL) participates in ATP binding.

As to quaternary structure, homodimer.

The enzyme catalyses XMP + L-glutamine + ATP + H2O = GMP + L-glutamate + AMP + diphosphate + 2 H(+). The protein operates within purine metabolism; GMP biosynthesis; GMP from XMP (L-Gln route): step 1/1. Its function is as follows. Catalyzes the synthesis of GMP from XMP. The protein is GMP synthase [glutamine-hydrolyzing] of Malacoplasma penetrans (strain HF-2) (Mycoplasma penetrans).